The primary structure comprises 761 residues: Protein spire homolog 1 (761 aa).

Disordered regions lie at residues Met-1 to Glu-23 and Asp-160 to Ser-183. The region spanning Leu-36–Leu-223 is the KIND domain. Positions Asp-160 to Ala-180 are enriched in acidic residues. Residues Ala-218–Glu-246 adopt a coiled-coil conformation. 2 consecutive WH2 domains span residues Pro-295–Val-313 and Leu-359–Val-376. Disordered regions lie at residues Pro-375–Asp-406 and Ala-419–Ala-539. Positions Ser-469–Asp-480 are enriched in low complexity. The span at Pro-504–Ala-520 shows a compositional bias: basic and acidic residues. Residues Leu-557–Glu-577 form a spir-box region. Disordered regions lie at residues Pro-630–Glu-694 and Ser-728–Val-761. Positions Ser-636–Leu-647 are enriched in low complexity. The span at Lys-682 to Leu-693 shows a compositional bias: basic and acidic residues. A compositionally biased stretch (basic residues) spans Ser-728–His-739. A compositionally biased stretch (low complexity) spans Ser-740–Ser-749.

This sequence belongs to the spire family.

The protein resides in the cytoplasm. It localises to the cytoskeleton. It is found in the cytosol. The protein localises to the cleavage furrow. Its subcellular location is the perinuclear region. The protein resides in the cell membrane. It localises to the cytoplasmic vesicle membrane. Functionally, acts as an actin nucleation factor, remains associated with the slow-growing pointed end of the new filament. Involved in intracellular vesicle transport along actin fibers, providing a novel link between actin cytoskeleton dynamics and intracellular transport. Required for asymmetric spindle positioning and asymmetric cell division during meiosis. Required for normal formation of the cleavage furrow and for polar body extrusion during female germ cell meiosis. Also acts in the nucleus: together with FMN2, promotes assembly of nuclear actin filaments in response to DNA damage in order to facilitate movement of chromatin and repair factors after DNA damage. In addition, promotes innate immune signaling downstream of dsRNA sensing. Mechanistically, contributes to IRF3 phosphorylation and activation downstream of MAVS and upstream of TBK1. The sequence is that of Protein spire homolog 1 from Danio rerio (Zebrafish).